The chain runs to 2193 residues: MGSQVSTQRSGSHENSNSATEGSTINYTTINYYKDSYAATAGKQSLKQDPDKFANPVKDIFTEMAAPLKSPSAEACGYSDRVAQLTIGNSTITTQEAANIIVGYGEWPSYCSDSDATAVDKPTRPDVSVNRFYTLDTKLWEKSSKGWYWKFPDVLTETGVFGQNAQFHYLYRSGFCIHVQCNASKFHQGALLVAVLPEYVIGTVAGGTGTEDSHPPYKQTQPGADGFELQHPYVLDAGIPISQLTVCPHQWINLRTNNCATIIVPYINALPFDSALNHCNFGLLVVPISPLDYDQGATPVIPITITLAPMCSEFAGLRQAVTQGFPTELKPGTNQFLTTDDGVSAPILPNFHPTPCIHIPGEVRNLLELCQVETILEVNNVPTNATSLMERLRFPVSAQAGKGELCAVFRADPGRNGPWQSTLLGQLCGYYTQWSGSLEVTFMFTGSFMATGKMLIAYTPPGGPLPKDRATAMLGTHVIWDFGLQSSVTLVIPWISNTHYRAHARDGVFDYYTTGLVSIWYQTNYVVPIGAPNTAYIIALAAAQKNFTMKLCKDASDILQTGTIQGDRVADVIESSIGDSVSRALTQALPAPTGQNTQVSSHRLDTGKVPALQAAEIGASSNASDESMIETRCVLNSHSTAETTLDSFFSRAGLVGEIDLPLEGTTNPNGYANWDIDITGYAQMRRKVELFTYMRFDAEFTFVACTPTGEVVPQLLQYMFVPPGAPKPDSRESLAWQTATNPSVFVKLSDPPAQVSVPFMSPASAYQWFYDGYPTFGEHKQEKDLEYGACPNNMMGTFSVRTVGTSKSKYPLVVRIYMRMKHVRAWIPRPMRNQNYLFKANPNYAGNSIKPTGTSRTAITTLGKFGQQSGAIYVGNFRVVNRHLATHNDWANLVWEDSSRDLLVSSTTAQGCDTIARCNCQTGVYYCNSRRKHYPVSFSKPSLIYVEASEYYPARYQSHLMLAQGHSEPGDCGGILRCQHGVVGIVSTGGNGLVGFADVRDLLWLDEEAMEQGVSDYIKGLGDAFGTGFTDAVSREVEALKSYLIGSEGAVEKILKNLIKLISALVIVIRSDYDMVTLTATLALIGCHGSPWAWIKAKTASILGIPIAQKQSASWLKKFNDMANAAKGLEWVSNKISKFIDWLKEKIVPAAKEKVEFLNNLKQLPLLENQISNLEQSAASQEDLEVMFGNVSYLAHFCRKFQPLYATEAKRVYALEKRMNNYMQFKSKHRIEPVCLIIRGSPGTGKSLATGIIARAIADKYHSSVYSLPPDPDHFDGYKQQVVTVMDDLCQNPDGKDMSLFCQMVSTVDFIPPMASLEEKGVSFTSKFVIASTNATNIIVPTVSDSDAIRRRFYMDCDIEVTDSYKTDLGRLDAGRAAKLCSENNTANFKRCSPLVCGKAIQLRDRKSKVRYSVDTVVSELIREYSNRSAIGNTIEALFQGPPKFRPIRIGLEEKPAPDAISDLLASVDSEEVRQYCRDQGWIIPETPTNVERHLNRAVLVMQSIATVVAVVSLVYVIYKLFAGFQGAYSGAPKQVLKKPALRTATVQGPSLDFALSLLRRNVRQVQTDQGHFTMLGVRDRLAVLPRHSQPGKTIWIEHKLVNVLDAVELVDEQGVNLELTLITLDTNEKFRDITKFIPENISTASDATLVINTEHMPSMFVPVGDVVQYGFLNLSGKPTHRTMMYNFPTKAGQCGGVVTSVGKVIGIHIGGNGRQGFCAGLKRSYFASEQGEIQWVKPNKETGRLNINGPTRTKLEPSVFHDVFEGSKEPAVLHSKDPRLEVDFEQALFSKYVGNTLHVPDEYIREAALHYANQLKQLDIDTTQMSMEEACYGTDNLEAIDLHTSAGYPYSALGIKKRDILDPTTRDVSKMKFYMDKYGLDLPYSTYVKDELRSIDKIKKGKSRLIEASSLNDSVYLRMAFGHLYETFHANPGTVTGSAVGCNPDVFWSKLPILLPGSLFAFDYSGYDASLSPVWFRALELVLREIGYSEEAVSLIEGINHTHHVYRNKTYCVLGGMPSGCSGTSIFNTMINNIIIRALLIKTFKGIDLDELNMVAYGDDVLASYPFPIDCLELAKTGKEYGLTMTPADKSPCFNEVNWENATFLKRGFLPDEQFPFLIHPTMPMKEIHESIRWTKDARNTQDHVRSLCLLAWHNGKQEYEKFVSSIRSVPIGKALAIPNYENLRRNWLELF.

The interval M1–G22 is disordered. The N-myristoyl glycine; by host moiety is linked to residue G2. The Cytoplasmic segment spans residues G2–Q1503. Amphipathic alpha-helix regions lie at residues G566 to A588 and R568 to A588. Active-site for protease 2A activity residues include H883 and D901. Positions 918 and 920 each coordinate Zn(2+). C972 acts as the For protease 2A activity in catalysis. The Zn(2+) site is built by C978 and H980. The segment at S1112–L1184 is membrane-binding. Residues S1112–T1250 are oligomerization. An RNA-binding region spans residues S1133–S1137. The SF3 helicase domain maps to E1216–A1374. G1240–S1247 is a binding site for ATP. Zn(2+) is bound by residues C1381, C1392, S1393, and C1397. The C4-type; degenerate zinc-finger motif lies at C1381 to C1397. Residues E1424 to I1431 form an RNA-binding region. An oligomerization region spans residues I1435 to Q1440. Residues S1504–Y1519 lie within the membrane without spanning it. At K1520–F2193 the chain is on the cytoplasmic side. An O-(5'-phospho-RNA)-tyrosine modification is found at Y1529. A Peptidase C3 domain is found at G1549–F1727. Catalysis depends on for protease 3C activity residues H1588, E1619, and C1695. A RdRp catalytic domain is found at G1958 to L2073. Mg(2+) is bound by residues D1964 and D2060.

Belongs to the picornaviruses polyprotein family. In terms of assembly, interacts with capsid protein VP1 and capsid protein VP3 to form heterotrimeric protomers. As to quaternary structure, interacts with capsid protein VP0, and capsid protein VP3 to form heterotrimeric protomers. Five protomers subsequently associate to form pentamers which serve as building blocks for the capsid. Interacts with capsid protein VP2, capsid protein VP3 and capsid protein VP4 following cleavage of capsid protein VP0. Interacts with host SCARB2. Interacts with host ARF6; this interaction mediates viral endocytosis. Interacts with capsid protein VP1 and capsid protein VP3 in the mature capsid. Interacts with host SCARB2. In terms of assembly, interacts with capsid protein VP0 and capsid protein VP1 to form heterotrimeric protomers. Five protomers subsequently associate to form pentamers which serve as building blocks for the capsid. Interacts with capsid protein VP4 in the mature capsid. Interacts with protein 2C; this interaction may be important for virion morphogenesis. As to quaternary structure, interacts with capsid protein VP1 and capsid protein VP3. Homodimer. In terms of assembly, interacts with host BAX; this interaction activates the mitochondrial apoptotic pathway. Interacts with host ILF2. As to quaternary structure, homohexamer; forms a hexameric ring structure with 6-fold symmetry characteristic of AAA+ ATPases. Interacts (via N-terminus) with host RTN3 (via reticulon domain); this interaction is important for viral replication. Interacts with capsid protein VP3; this interaction may be important for virion morphogenesis. Interacts with protein 3CD. In terms of assembly, homodimer. Interacts with host GBF1. Interacts (via GOLD domain) with host ACBD3 (via GOLD domain); this interaction allows the formation of a viral protein 3A/ACBD3 heterotetramer with a 2:2 stoichiometry, which will stimulate the recruitment of host PI4KB in order to synthesize PI4P at the viral RNA replication sites. As to quaternary structure, interacts with RNA-directed RNA polymerase. Interacts with host IFIH1/MDA5; this interaction inhibits host IFIH1. Interacts with host RIGI. In terms of assembly, interacts with protein 3AB and with RNA-directed RNA polymerase. As to quaternary structure, interacts with Viral protein genome-linked and with protein 3CD. It depends on Mg(2+) as a cofactor. Specific enzymatic cleavages in vivo by the viral proteases yield processing intermediates and the mature proteins. Post-translationally, myristoylation is required for the formation of pentamers during virus assembly. Further assembly of 12 pentamers and a molecule of genomic RNA generates the provirion. In terms of processing, during virion maturation, immature virions are rendered infectious following cleavage of VP0 into VP4 and VP2. This maturation seems to be an autocatalytic event triggered by the presence of RNA in the capsid and it is followed by a conformational change infectious virion. Myristoylation is required during RNA encapsidation and formation of the mature virus particle. Post-translationally, VPg is uridylylated by the polymerase into VPg-pUpU. This acts as a nucleotide-peptide primer for the genomic RNA replication.

It is found in the virion. The protein resides in the host cytoplasm. It localises to the host cytoplasmic vesicle membrane. Its subcellular location is the host nucleus. It catalyses the reaction a ribonucleoside 5'-triphosphate + H2O = a ribonucleoside 5'-diphosphate + phosphate + H(+). It carries out the reaction Selective cleavage of Tyr-|-Gly bond in the picornavirus polyprotein.. The enzyme catalyses RNA(n) + a ribonucleoside 5'-triphosphate = RNA(n+1) + diphosphate. The catalysed reaction is Selective cleavage of Gln-|-Gly bond in the poliovirus polyprotein. In other picornavirus reactions Glu may be substituted for Gln, and Ser or Thr for Gly.. With respect to regulation, replication or transcription is subject to high level of random mutations by the nucleotide analog ribavirin. Functionally, forms an icosahedral capsid of pseudo T=3 symmetry with capsid proteins VP2 and VP3. The capsid is 300 Angstroms in diameter, composed of 60 copies of each capsid protein and enclosing the viral positive strand RNA genome. Capsid protein VP1 mainly forms the vertices of the capsid. Capsid protein VP1, together with VP2, interacts with host cell receptor SCARB2 to provide virion attachment to target host cells. This attachment induces virion internalization. This attachment induces virion internalization. After binding to its receptor, the capsid undergoes conformational changes. Capsid protein VP1 N-terminus (that contains an amphipathic alpha-helix) and capsid protein VP4 are externalized. Together, they shape a pore in the host membrane through which viral genome is translocated to host cell cytoplasm. Forms an icosahedral capsid of pseudo T=3 symmetry with capsid proteins VP2 and VP3. The capsid is 300 Angstroms in diameter, composed of 60 copies of each capsid protein and enclosing the viral positive strand RNA genome. Capsid protein VP2, together with VP1, interacts with host cell receptor SCARB2 to provide virion attachment to target host cells. Its function is as follows. Forms an icosahedral capsid of pseudo T=3 symmetry with capsid proteins VP2 and VP3. The capsid is 300 Angstroms in diameter, composed of 60 copies of each capsid protein and enclosing the viral positive strand RNA genome. In terms of biological role, lies on the inner surface of the capsid shell. After binding to the host receptor, the capsid undergoes conformational changes. Capsid protein VP4 is released, Capsid protein VP1 N-terminus is externalized, and together, they shape a pore in the host membrane through which the viral genome is translocated into the host cell cytoplasm. Functionally, component of immature procapsids, which is cleaved into capsid proteins VP4 and VP2 after maturation. Allows the capsid to remain inactive before the maturation step. Cysteine protease that cleaves viral polyprotein and specific host proteins. It is responsible for the autocatalytic cleavage between the P1 and P2 regions, which is the first cleavage occurring in the polyprotein. Also cleaves the host translation initiation factor EIF4G1, in order to shut down the capped cellular mRNA translation. Inhibits the host nucleus-cytoplasm protein and RNA trafficking by cleaving host members of the nuclear pores. Counteracts stress granule formation probably by antagonizing its assembly or promoting its dissassembly. Cleaves and inhibits host IFIH1/MDA5, thereby inhibiting the type-I IFN production and the establishment of the antiviral state. Cleaves and inhibits host MAVS, thereby inhibiting the type-I IFN production and the establishment of the antiviral state. Its function is as follows. Plays an essential role in the virus replication cycle by acting as a viroporin. Creates a pore in the host endoplasmic reticulum and as a consequence releases Ca2+ in the cytoplasm of infected cell. In turn, high levels of cytoplasmic calcium may trigger membrane trafficking and transport of viral ER-associated proteins to viroplasms, sites of viral genome replication. Also activates the mitochondrial apoptotic pathway by activating host BAX. In terms of biological role, induces and associates with structural rearrangements of intracellular membranes. Displays RNA-binding, nucleotide binding and NTPase activities. May play a role in virion morphogenesis and viral RNA encapsidation by interacting with the capsid protein VP3. Functionally, localizes the viral replication complex to the surface of membranous vesicles. Together with protein 3CD binds the Cis-Active RNA Element (CRE) which is involved in RNA synthesis initiation. Acts as a cofactor to stimulate the activity of 3D polymerase, maybe through a nucleid acid chaperone activity. Localizes the viral replication complex to the surface of membranous vesicles. It inhibits host cell endoplasmic reticulum-to-Golgi apparatus transport and causes the disassembly of the Golgi complex, possibly through GBF1 interaction. This would result in depletion of MHC, trail receptors and IFN receptors at the host cell surface. Plays an essential role in viral RNA replication by recruiting ACBD3 and PI4KB at the viral replication sites, thereby allowing the formation of the rearranged membranous structures where viral replication takes place. Its function is as follows. Acts as a primer for viral RNA replication and remains covalently bound to viral genomic RNA. VPg is uridylylated prior to priming replication into VPg-pUpU. The oriI viral genomic sequence may act as a template for this. The VPg-pUpU is then used as primer on the genomic RNA poly(A) by the RNA-dependent RNA polymerase to replicate the viral genome. During genome replication, the VPg-RNA linkage is removed by the host TDP2, thereby accelerating replication. During the late stage of the replication cycle, host TDP2 is excluded from sites of viral RNA synthesis and encapsidation, allowing for the generation of progeny virions. In terms of biological role, involved in the viral replication complex and viral polypeptide maturation. It exhibits protease activity with a specificity and catalytic efficiency that is different from protease 3C. Protein 3CD lacks polymerase activity. Protein 3CD binds to the 5'UTR of the viral genome. Functionally, major viral protease that mediates proteolytic processing of the polyprotein. Cleaves host EIF5B, contributing to host translation shutoff. Also cleaves host PABPC1, contributing to host translation shutoff. Disassembles host cytoplasmic stress granules by cleaving host G3BP1, although this effect is less prononced than the inhibition induced by protease 2A. Cleaves host RIGI and thus contributes to the inhibition of type I interferon production. Cleaves host IRF7 and thus contributes to the inhibition of type I interferon production. Cleaves host HNRNPA1 thereby increasing the translation of apoptosis protease activating factor APAF1, leading to apoptosis of the host cell. Cleaves host NLRP1, triggers host N-glycine-mediated degradation of the autoinhibitory NLRP1 N-terminal fragment. Replicates the viral genomic RNA on the surface of intracellular membranes. May form linear arrays of subunits that propagate along a strong head-to-tail interaction called interface-I. Covalently attaches UMP to a tyrosine of VPg, which is used to prime RNA synthesis. The positive stranded RNA genome is first replicated at virus induced membranous vesicles, creating a dsRNA genomic replication form. This dsRNA is then used as template to synthesize positive stranded RNA genomes. ss(+)RNA genomes are either translated, replicated or encapsidated. The protein is Genome polyprotein of Homo sapiens (Human).